Here is a 333-residue protein sequence, read N- to C-terminus: uncharacterized protein (333 aa).

It belongs to the proline racemase family.

This is an uncharacterized protein from Vibrio parahaemolyticus serotype O3:K6 (strain RIMD 2210633).